The chain runs to 396 residues: GPN-loop GTPase 1 (396 aa).

Low complexity predominate over residues 1–13; the sequence is MSETTATSTTTTK. The interval 1–30 is disordered; the sequence is MSETTATSTTTTKTTDKDNVNNNNNNENKE. Residue 44–49 participates in GTP binding; sequence GSGKTT. Positions 101–103 match the Gly-Pro-Asn (GPN)-loop; involved in dimer interface motif; sequence GPN. 204–207 serves as a coordination point for GTP; sequence NKID. A coiled-coil region spans residues 284–387; the sequence is YKADLEKIKK…ERLEDQRAYE (104 aa). A compositionally biased stretch (basic and acidic residues) spans 325–342; the sequence is DFKKEKKRENQEKTKNIY. The disordered stretch occupies residues 325–396; the sequence is DFKKEKKREN…ESLMSSIKKI (72 aa). Positions 343-380 are enriched in acidic residues; that stretch reads DDEEDDYRDDRDMEDSGEYESYEDEQEEGDYENEEERL.

It belongs to the GPN-loop GTPase family. Heterodimer with gpn3. Binds to RNA polymerase II (RNAPII).

It localises to the cytoplasm. The protein resides in the nucleus. Its function is as follows. Small GTPase required for proper nuclear import of RNA polymerase II (RNAPII). May act at an RNAP assembly step prior to nuclear import. This Dictyostelium discoideum (Social amoeba) protein is GPN-loop GTPase 1 (gpn1).